The following is a 115-amino-acid chain: UPF0122 protein lp_1634 (115 aa).

The protein belongs to the UPF0122 family.

Functionally, might take part in the signal recognition particle (SRP) pathway. This is inferred from the conservation of its genetic proximity to ftsY/ffh. May be a regulatory protein. This Lactiplantibacillus plantarum (strain ATCC BAA-793 / NCIMB 8826 / WCFS1) (Lactobacillus plantarum) protein is UPF0122 protein lp_1634.